The following is a 230-amino-acid chain: Cytochrome b6-f complex iron-sulfur subunit, chloroplastic (230 aa).

A chloroplast-targeting transit peptide spans 1 to 51 (MASFTLSSATPSQLCSSKNGMFAPSLALAKAGRVNVLISKERIRGMKLTCQ). The helical transmembrane segment at 73–93 (LLGALSLPTGYMLLPYASFFV) threads the bilayer. Residues 116–212 (AAEWLKTHAP…CDVDDGKVVF (97 aa)) enclose the Rieske domain. The [2Fe-2S] cluster site is built by C158, H160, C176, and H179. A disulfide bond links C163 and C178.

It belongs to the Rieske iron-sulfur protein family. In terms of assembly, the 4 large subunits of the cytochrome b6-f complex are cytochrome b6, subunit IV (17 kDa polypeptide, petD), cytochrome f and the Rieske protein, while the 4 small subunits are petG, petL, petM and petN. The complex functions as a dimer. [2Fe-2S] cluster serves as cofactor.

The protein resides in the plastid. It localises to the chloroplast thylakoid membrane. The enzyme catalyses 2 oxidized [plastocyanin] + a plastoquinol + 2 H(+)(in) = 2 reduced [plastocyanin] + a plastoquinone + 4 H(+)(out). Its function is as follows. Component of the cytochrome b6-f complex, which mediates electron transfer between photosystem II (PSII) and photosystem I (PSI), cyclic electron flow around PSI, and state transitions. This is Cytochrome b6-f complex iron-sulfur subunit, chloroplastic (petC) from Spinacia oleracea (Spinach).